A 529-amino-acid chain; its full sequence is E3 ubiquitin-protein ligase arih1 (529 aa).

2 disordered regions span residues 1–30 (MDSD…EDDL) and 49–68 (GICG…GEEE). Positions 51–64 (CGEGGGSALGPGPG) are enriched in gly residues. The interval 77 to 125 (TAEQILQHMVECIREVNEVIQNPATITRILLSHFNWDKEKLMERYFDGN) is UBA-like. The segment at 154-365 (QDMPCQICYL…SAWYNCNRYN (212 aa)) is TRIAD supradomain. Zn(2+) is bound by residues Cys158, Cys161, Cys175, His177, Cys180, Cys183, Cys203, Cys208, Cys248, Cys253, Cys269, Cys271, Cys276, Cys279, His284, Cys289, Cys316, and Cys319. An RING-type 1 zinc finger spans residues 158–208 (CQICYLNYPNSYFTGLECGHKFCMQCWSEYLTTKIIEEGMGQTISCPAHGC). Residues 228–289 (LKYQHLITNS…GENWHDPVKC (62 aa)) form an IBR-type zinc finger. An RING-type 2; atypical zinc finger spans residues 316-347 (CPKCHVTIEKDGGCNHMVCRNQNCKAEFCWVC). Residue Cys329 is part of the active site. 6 residues coordinate Zn(2+): Cys334, Cys339, Cys344, Cys347, His354, and Cys361. Positions 380–529 (RAALQRYLFY…EKDLWEYIED (150 aa)) are ariadne domain.

It belongs to the RBR family. Ariadne subfamily. As to quaternary structure, interacts (via the first RING-type zinc finger) with ube2l3. Associates with cullin-RING ubiquitin ligase (CRL) complexes containing neddylated cullin.

The protein localises to the cytoplasm. It localises to the nucleus. It catalyses the reaction [E2 ubiquitin-conjugating enzyme]-S-ubiquitinyl-L-cysteine + [acceptor protein]-L-lysine = [E2 ubiquitin-conjugating enzyme]-L-cysteine + [acceptor protein]-N(6)-ubiquitinyl-L-lysine.. It participates in protein modification; protein ubiquitination. With respect to regulation, autoinhibited by the ariadne domain, which masks the second RING-type zinc finger that contains the active site and inhibits the E3 activity. Inhibition is relieved upon binding to neddylated cullin-RING ubiquitin ligase complexes, which activate the E3 ligase activity of ARIH1. In terms of biological role, E3 ubiquitin-protein ligase, which catalyzes ubiquitination of target proteins together with ubiquitin-conjugating enzyme E2 ube2l3. Acts as an atypical E3 ubiquitin-protein ligase by working together with cullin-RING ubiquitin ligase (CRL) complexes and initiating ubiquitination of CRL substrates: associates with CRL complexes and specifically mediates addition of the first ubiquitin on CRLs targets. The initial ubiquitin is then elongated. E3 ubiquitin-protein ligase activity is activated upon binding to neddylated cullin-RING ubiquitin ligase complexes. This Xenopus tropicalis (Western clawed frog) protein is E3 ubiquitin-protein ligase arih1 (arih1).